The primary structure comprises 449 residues: Exodeoxyribonuclease 7 large subunit (449 aa).

The protein belongs to the XseA family. As to quaternary structure, heterooligomer composed of large and small subunits.

The protein resides in the cytoplasm. It catalyses the reaction Exonucleolytic cleavage in either 5'- to 3'- or 3'- to 5'-direction to yield nucleoside 5'-phosphates.. Functionally, bidirectionally degrades single-stranded DNA into large acid-insoluble oligonucleotides, which are then degraded further into small acid-soluble oligonucleotides. This chain is Exodeoxyribonuclease 7 large subunit, found in Lacticaseibacillus paracasei (strain ATCC 334 / BCRC 17002 / CCUG 31169 / CIP 107868 / KCTC 3260 / NRRL B-441) (Lactobacillus paracasei).